Consider the following 214-residue polypeptide: Thymidylate kinase (214 aa).

15-22 is a binding site for ATP; the sequence is GLEGAGKT.

It belongs to the thymidylate kinase family.

It carries out the reaction dTMP + ATP = dTDP + ADP. Phosphorylation of dTMP to form dTDP in both de novo and salvage pathways of dTTP synthesis. This is Thymidylate kinase from Haemophilus ducreyi (strain 35000HP / ATCC 700724).